The following is a 198-amino-acid chain: GTP cyclohydrolase-2 (198 aa).

49–53 contacts GTP; the sequence is RVHSE. Zn(2+)-binding residues include cysteine 54, cysteine 65, and cysteine 67. GTP is bound by residues glutamine 70, 92 to 94, and threonine 114; that span reads EGR. The Proton acceptor role is filled by aspartate 126. The active-site Nucleophile is arginine 128. 2 residues coordinate GTP: threonine 149 and lysine 154.

The protein belongs to the GTP cyclohydrolase II family. As to quaternary structure, homodimer. Zn(2+) is required as a cofactor.

It catalyses the reaction GTP + 4 H2O = 2,5-diamino-6-hydroxy-4-(5-phosphoribosylamino)-pyrimidine + formate + 2 phosphate + 3 H(+). The protein operates within cofactor biosynthesis; riboflavin biosynthesis; 5-amino-6-(D-ribitylamino)uracil from GTP: step 1/4. Functionally, catalyzes the conversion of GTP to 2,5-diamino-6-ribosylamino-4(3H)-pyrimidinone 5'-phosphate (DARP), formate and pyrophosphate. This is GTP cyclohydrolase-2 from Escherichia fergusonii (strain ATCC 35469 / DSM 13698 / CCUG 18766 / IAM 14443 / JCM 21226 / LMG 7866 / NBRC 102419 / NCTC 12128 / CDC 0568-73).